Here is a 269-residue protein sequence, read N- to C-terminus: Prespore protein Dd31 (269 aa).

Residues 1–17 (MEHNNNPGTPQMSSEFP) show a composition bias toward polar residues. A disordered region spans residues 1-35 (MEHNNNPGTPQMSSEFPASTTQTSSSAAAYDNSSH). Over residues 18 to 29 (ASTTQTSSSAAA) the composition is skewed to low complexity. 4 helical membrane passes run 111-131 (FGIF…VVSI), 139-159 (VDNF…LYFL), 177-197 (YAYL…FVGF), and 225-245 (VSLF…IMYL).

It belongs to the SCAMP family.

The protein localises to the membrane. The protein resides in the spore coat. This Dictyostelium discoideum (Social amoeba) protein is Prespore protein Dd31 (spiA).